Reading from the N-terminus, the 191-residue chain is Fe/S biogenesis protein NfuA (191 aa).

Positions 149 and 152 each coordinate [4Fe-4S] cluster.

This sequence belongs to the NfuA family. As to quaternary structure, homodimer. [4Fe-4S] cluster serves as cofactor.

Its function is as follows. Involved in iron-sulfur cluster biogenesis. Binds a 4Fe-4S cluster, can transfer this cluster to apoproteins, and thereby intervenes in the maturation of Fe/S proteins. Could also act as a scaffold/chaperone for damaged Fe/S proteins. This is Fe/S biogenesis protein NfuA from Salmonella typhi.